The chain runs to 201 residues: Snake venom metalloproteinase trimerelysin-2 (201 aa).

Gln1 carries the post-translational modification Pyrrolidone carboxylic acid. Residues 6-201 (RYIELAIVVD…YNPQCILNAP (196 aa)) enclose the Peptidase M12B domain. Residue Asn72 is glycosylated (N-linked (GlcNAc...) asparagine). 3 disulfide bridges follow: Cys117-Cys196, Cys158-Cys180, and Cys160-Cys163. His142 is a Zn(2+) binding site. Glu143 is a catalytic residue. 2 residues coordinate Zn(2+): His146 and His152.

Belongs to the venom metalloproteinase (M12B) family. P-I subfamily. In terms of assembly, monomer. The cofactor is Zn(2+). As to expression, expressed by the venom gland.

It localises to the secreted. It catalyses the reaction Cleavage of 3-Asn-|-Gln-4, 10-His-|-Leu-11 and 14-Ala-|-Leu-15 in the insulin B chain, and the bond Z-Gly-Pro-|-Leu-Gly-Pro in a small molecule substrate of microbial collagenase.. Functionally, major venom non-hemorrhagic metalloproteinase. This chain is Snake venom metalloproteinase trimerelysin-2, found in Protobothrops flavoviridis (Habu).